We begin with the raw amino-acid sequence, 563 residues long: BOS complex subunit NCLN (563 aa).

Residues 1–42 (MLEEAGEVLENMLKASCLPLGFIVFLPAVLLLVAPPLPAADA) form the signal peptide. The Lumenal portion of the chain corresponds to 43–522 (AHEFTVYRMQ…VMNAYRVKPA (480 aa)). N-linked (GlcNAc...) asparagine glycans are attached at residues N241 and N428. The helical transmembrane segment at 523–543 (VFDLLLAVGIAAYLGMAYVAV) threads the bilayer. At 544 to 563 (QHFSLLYKTVQRLLVKAKTQ) the chain is on the cytoplasmic side.

The protein belongs to the nicastrin family. In terms of assembly, component of the back of Sec61 (BOS) complex, composed of NCLN/Nicalin, NOMO (NOMO1, NOMO2 or NOMO3) and TMEM147. The BOS complex is part of the multi-pass translocon (MPT) complex, composed of three subcomplexes, the GEL complex (composed of RAB5IF/OPTI and TMCO1), the BOS complex (composed of NCLN/Nicalin, NOMO and TMEM147) and the PAT complex (composed of WDR83OS/Asterix and CCDC47). The MPT complex associates with the SEC61 complex. In terms of tissue distribution, highly expressed in pancreas and skeletal muscle and, at lower levels, in heart.

It is found in the endoplasmic reticulum membrane. Its function is as follows. Component of the multi-pass translocon (MPT) complex that mediates insertion of multi-pass membrane proteins into the lipid bilayer of membranes. The MPT complex takes over after the SEC61 complex: following membrane insertion of the first few transmembrane segments of proteins by the SEC61 complex, the MPT complex occludes the lateral gate of the SEC61 complex to promote insertion of subsequent transmembrane regions. May antagonize Nodal signaling and subsequent organization of axial structures during mesodermal patterning, via its interaction with NOMO. This Homo sapiens (Human) protein is BOS complex subunit NCLN.